The primary structure comprises 410 residues: Cysteine desulfurase IscS (410 aa).

Residues 80–81 (AT), asparagine 160, glutamine 188, and 208–210 (SGH) each bind pyridoxal 5'-phosphate. Lysine 211 is subject to N6-(pyridoxal phosphate)lysine. Pyridoxal 5'-phosphate is bound at residue threonine 248. Cysteine 334 serves as the catalytic Cysteine persulfide intermediate. Cysteine 334 contributes to the [2Fe-2S] cluster binding site.

It belongs to the class-V pyridoxal-phosphate-dependent aminotransferase family. NifS/IscS subfamily. As to quaternary structure, homodimer. Forms a heterotetramer with IscU, interacts with other sulfur acceptors. Requires pyridoxal 5'-phosphate as cofactor.

It is found in the cytoplasm. It carries out the reaction (sulfur carrier)-H + L-cysteine = (sulfur carrier)-SH + L-alanine. It participates in cofactor biosynthesis; iron-sulfur cluster biosynthesis. In terms of biological role, master enzyme that delivers sulfur to a number of partners involved in Fe-S cluster assembly, tRNA modification or cofactor biosynthesis. Catalyzes the removal of elemental sulfur atoms from cysteine to produce alanine. Functions as a sulfur delivery protein for Fe-S cluster synthesis onto IscU, an Fe-S scaffold assembly protein, as well as other S acceptor proteins. This is Cysteine desulfurase IscS from Rickettsia typhi (strain ATCC VR-144 / Wilmington).